The chain runs to 101 residues: Small ribosomal subunit protein uS14 (101 aa).

Residues 51-72 (LPRDSSPSRQRNPCRQTGRPHG) are disordered. The span at 52 to 65 (PRDSSPSRQRNPCR) shows a compositional bias: polar residues.

It belongs to the universal ribosomal protein uS14 family. In terms of assembly, part of the 30S ribosomal subunit. Contacts proteins S3 and S10.

In terms of biological role, binds 16S rRNA, required for the assembly of 30S particles and may also be responsible for determining the conformation of the 16S rRNA at the A site. The polypeptide is Small ribosomal subunit protein uS14 (Buchnera aphidicola subsp. Acyrthosiphon kondoi (Acyrthosiphon kondoi symbiotic bacterium)).